Here is a 288-residue protein sequence, read N- to C-terminus: MSQISAKAVKELRDKTGVGMMDCKKALDESGGDMQKAVEYLRKKGAALAAKRAEREASEGVVIVKINDAADTGIILELNCETDFVARGDDFTGFADTIAQTALDGSVDSAEKMMGVSLGEAYDGEKVEDAIKTMTGKLGEKIQLKRLAYVRSEGGLVAGYVHPGSKLGSIVELSGGNSAEAVVLAKDIAMQVAAATPIVVDRSSVPAEYIEKEKEIYRQQALAQGKPEKFVDKIITGRLEKYFQEEVLLEQAYIKDSNTKVSDVLHEFTKQYDMPITVNSFIRYQLGA.

Residues 82-85 are involved in Mg(2+) ion dislocation from EF-Tu; that stretch reads TDFV.

Belongs to the EF-Ts family.

The protein resides in the cytoplasm. Functionally, associates with the EF-Tu.GDP complex and induces the exchange of GDP to GTP. It remains bound to the aminoacyl-tRNA.EF-Tu.GTP complex up to the GTP hydrolysis stage on the ribosome. This Chlorobium phaeobacteroides (strain BS1) protein is Elongation factor Ts.